The primary structure comprises 513 residues: Zinc finger CCCH-type with G patch domain-containing protein (513 aa).

The segment at 155 to 178 adopts a C3H1-type zinc-finger fold; the sequence is PCSYYLEGECRFDETKCRFSHGAL. Composition is skewed to acidic residues over residues 252–261 and 271–283; these read DQDEDDELSS and DSSDEAESDMDDL. The segment at 252–283 is disordered; the sequence is DQDEDDELSSEESNSSMNDDSSDEAESDMDDL. Positions 312–358 constitute a G-patch domain; sequence TRGIGSKLMEKMGYIHGTGLGSDGRGIVTPVSAQILPQGRSLDACME. Over residues 455-467 the composition is skewed to basic and acidic residues; that stretch reads DMAKVKQSLDRNS. Positions 455-513 are disordered; the sequence is DMAKVKQSLDRNSGDAQLQKRLQVQMESHKQELATLQAQERSLSKEQQTRKSKNKMFEF. A compositionally biased stretch (polar residues) spans 468 to 480; sequence GDAQLQKRLQVQM. The segment covering 496–513 has biased composition (basic and acidic residues); it reads SLSKEQQTRKSKNKMFEF.

Its subcellular location is the nucleus. Functionally, transcription repressor. This is Zinc finger CCCH-type with G patch domain-containing protein from Drosophila yakuba (Fruit fly).